A 302-amino-acid chain; its full sequence is Nucleotide-binding protein Bmul_0520/BMULJ_02739 (302 aa).

8–15 serves as a coordination point for ATP; the sequence is GISGSGKS. 57 to 60 lines the GTP pocket; it reads DARS.

The protein belongs to the RapZ-like family.

Its function is as follows. Displays ATPase and GTPase activities. This Burkholderia multivorans (strain ATCC 17616 / 249) protein is Nucleotide-binding protein Bmul_0520/BMULJ_02739.